The sequence spans 316 residues: Ribosomal RNA small subunit methyltransferase H (316 aa).

S-adenosyl-L-methionine contacts are provided by residues 35–37, aspartate 55, phenylalanine 79, aspartate 101, and glutamine 108; that span reads GGH.

This sequence belongs to the methyltransferase superfamily. RsmH family.

It is found in the cytoplasm. The catalysed reaction is cytidine(1402) in 16S rRNA + S-adenosyl-L-methionine = N(4)-methylcytidine(1402) in 16S rRNA + S-adenosyl-L-homocysteine + H(+). In terms of biological role, specifically methylates the N4 position of cytidine in position 1402 (C1402) of 16S rRNA. The polypeptide is Ribosomal RNA small subunit methyltransferase H (Aliivibrio salmonicida (strain LFI1238) (Vibrio salmonicida (strain LFI1238))).